We begin with the raw amino-acid sequence, 617 residues long: 1-deoxy-D-xylulose-5-phosphate synthase (617 aa).

Residues histidine 76 and 117–119 (GHS) contribute to the thiamine diphosphate site. Aspartate 148 lines the Mg(2+) pocket. Thiamine diphosphate-binding positions include 149–150 (GA), asparagine 177, tyrosine 285, and glutamate 366. Asparagine 177 provides a ligand contact to Mg(2+).

This sequence belongs to the transketolase family. DXPS subfamily. As to quaternary structure, homodimer. The cofactor is Mg(2+). Thiamine diphosphate is required as a cofactor.

The enzyme catalyses D-glyceraldehyde 3-phosphate + pyruvate + H(+) = 1-deoxy-D-xylulose 5-phosphate + CO2. The protein operates within metabolic intermediate biosynthesis; 1-deoxy-D-xylulose 5-phosphate biosynthesis; 1-deoxy-D-xylulose 5-phosphate from D-glyceraldehyde 3-phosphate and pyruvate: step 1/1. In terms of biological role, catalyzes the acyloin condensation reaction between C atoms 2 and 3 of pyruvate and glyceraldehyde 3-phosphate to yield 1-deoxy-D-xylulose-5-phosphate (DXP). The protein is 1-deoxy-D-xylulose-5-phosphate synthase of Histophilus somni (strain 129Pt) (Haemophilus somnus).